A 209-amino-acid polypeptide reads, in one-letter code: uncharacterized protein (209 aa).

Positions 1–17 (MKKLVTGLLALSLFLAA) are cleaved as a signal peptide. Positions 17–106 (ACGQDSDQQK…SGQTTNNQKS (90 aa)) are disordered. Cysteine 18 carries N-palmitoyl cysteine lipidation. A lipid anchor (S-diacylglycerol cysteine) is attached at cysteine 18. Positions 23-70 (DQQKDSNKEKDDKAKTEQQDKKTNDSSKDKKDNKDDSKDVNKDNKDNS) are enriched in basic and acidic residues. Over residues 71–106 (ANDNQQQSNSNATNNDQNQTNNNQSNSGQTTNNQKS) the composition is skewed to low complexity.

It localises to the cell membrane. This is an uncharacterized protein from Staphylococcus aureus (strain MRSA252).